Reading from the N-terminus, the 219-residue chain is Small ribosomal subunit protein uS3 (219 aa).

The region spanning 38 to 106 is the KH type-2 domain; the sequence is IREYIENRLK…RVHINIFEVK (69 aa).

Belongs to the universal ribosomal protein uS3 family. Part of the 30S ribosomal subunit. Forms a tight complex with proteins S10 and S14.

In terms of biological role, binds the lower part of the 30S subunit head. Binds mRNA in the 70S ribosome, positioning it for translation. This chain is Small ribosomal subunit protein uS3, found in Halalkalibacterium halodurans (strain ATCC BAA-125 / DSM 18197 / FERM 7344 / JCM 9153 / C-125) (Bacillus halodurans).